The sequence spans 78 residues: Large ribosomal subunit protein bL28 (78 aa).

The protein belongs to the bacterial ribosomal protein bL28 family.

This is Large ribosomal subunit protein bL28 from Synechococcus sp. (strain ATCC 27144 / PCC 6301 / SAUG 1402/1) (Anacystis nidulans).